The sequence spans 186 residues: Lipid A palmitoyltransferase PagP (186 aa).

The N-terminal stretch at 1–25 is a signal peptide; the sequence is MNVSKYVAIFSFVFIQLISVGKVFA. Active-site residues include His58, Asp101, and Ser102.

This sequence belongs to the lipid A palmitoyltransferase family. Homodimer.

It localises to the cell outer membrane. The catalysed reaction is lipid A (E. coli) + a 1-hexadecanoyl-2-acyl-sn-glycero-3-phosphocholine = hepta-acyl lipid A (E. coli) + a 2-acyl-sn-glycero-3-phosphocholine. It carries out the reaction lipid IIA + a 1-hexadecanoyl-2-acyl-sn-glycero-3-phosphocholine = lipid IIB + a 2-acyl-sn-glycero-3-phosphocholine. The enzyme catalyses lipid IVA (E. coli) + a 1-hexadecanoyl-2-acyl-sn-glycero-3-phosphocholine = lipid IVB (E. coli) + a 2-acyl-sn-glycero-3-phosphocholine. Transfers a palmitate residue from the sn-1 position of a phospholipid to the N-linked hydroxymyristate on the proximal unit of lipid A or its precursors. In Escherichia coli (strain ATCC 55124 / KO11FL), this protein is Lipid A palmitoyltransferase PagP.